Consider the following 744-residue polypeptide: MASEATHIPSPVVRQIDKQFLICSICLERYKNPKVLPCLHTFCERCLQNYIPAHSLTLSCPVCRQTSILPEKGVAALQNNFFITNLMDVLQRTPGSNVEESSILETVTAVAAGKPLSCPNHDGNVMDFYCQSCETAMCRECTEGEHAEHPTVPLKDVVEQHKASLQVQLDAVNKRLPEIDSALQFISEIIHQLTNQKASIVDDIHSTFDELQKTLNVRKSVLLMELEVNYGLKHKVLQSQLDTLLEGQESIKSCSNFTAQALNHGTETEVLLVKKQMSEKLNELADQDFPLHPRENDQLDFIVETEGLKKSIHNLGTILTTNAVASETVATGEGLRQTIIGQPMSVTITTKDKDGELCKTGNAYITAELSTPDGSVADGEILDNKNGTYEFLYTVQKEGDFTLSLRLYDQHIRGSPFKLKVIRSADVSPTTEGVKRRVKSPGSGHVKQKAVKRPASMYSTGKRKENPIEDDLIFRVGTKGRNKGEFTNLQGVAASTSGKILIADSNNQCVQIFSNDGQFKSRFGIRGRSPGQLQRPTGVAVHPSGDIIIADYDNKWVSIFSSDGKFKTKIGSGKLMGPKGVSVDRNGHIIVVDNKACCVFIFQPNGKIVTRFGSRGNGDRQFAGPHFAAVNSNNEIIVTDFHNHSVKVFNQEGEFMLKFGSNGEGNGQFNAPTGVAVDSNGNIIVADWGNSRIQVFDGSGSFLSYINTSADPLYGPQGLALTSDGHVVVADSGNHCFKVYRYLQ.

Ser10 carries the post-translational modification Phosphoserine. The segment at 23–64 adopts an RING-type zinc-finger fold; it reads CSICLERYKNPKVLPCLHTFCERCLQNYIPAHSLTLSCPVCR. The B box-type zinc finger occupies 113-154; the sequence is GKPLSCPNHDGNVMDFYCQSCETAMCRECTEGEHAEHPTVPL. Cys118, His121, Cys141, and His146 together coordinate Zn(2+). One copy of the Filamin repeat lies at 320-421; sequence TTNAVASETV…IRGSPFKLKV (102 aa). A Phosphothreonine modification is found at Thr371. 3 positions are modified to phosphoserine: Ser375, Ser424, and Ser428. Residues 432–462 are disordered; the sequence is EGVKRRVKSPGSGHVKQKAVKRPASMYSTGK. 6 NHL repeats span residues 473–516, 520–563, 564–605, 609–652, 656–699, and 700–743; these read IFRV…FSND, KSRF…FSSD, GKFK…FQPN, VTRF…FNQE, MLKF…FDGS, and GSFL…YRYL.

This sequence belongs to the TRIM/RBCC family. Forms homooligomers. Interacts with TRIM3; this interaction reduces TRIM2 activity. Interacts with myosin V; myosin V may not be a substrate for ubiquitination. Interacts with NEFL. Interacts with phosphorylated BCL2L11. Interacts with SIRPA. RING-type zinc finger-dependent and UBE2D1-dependent autoubiquitination.

The protein resides in the cytoplasm. The catalysed reaction is S-ubiquitinyl-[E2 ubiquitin-conjugating enzyme]-L-cysteine + [acceptor protein]-L-lysine = [E2 ubiquitin-conjugating enzyme]-L-cysteine + N(6)-ubiquitinyl-[acceptor protein]-L-lysine.. Its pathway is protein modification; protein ubiquitination. UBE2D1-dependent E3 ubiquitin-protein ligase that mediates the ubiquitination of NEFL and of phosphorylated BCL2L11. Plays a neuroprotective function. May play a role in neuronal rapid ischemic tolerance. Plays a role in antiviral immunity and limits New World arenavirus infection independently of its ubiquitin ligase activity. The polypeptide is Tripartite motif-containing protein 2 (TRIM2) (Ailuropoda melanoleuca (Giant panda)).